Consider the following 445-residue polypeptide: Ribosome biogenesis protein YTM1 (445 aa).

Residues 8 to 89 form a ubiquitin-like (UBL) domain region; the sequence is VKVKFFTREQ…EAVLNVEYTR (82 aa). Residues 99–445 form a sufficient for interaction with ERB1 and association with 66S pre-ribosomes region; sequence SFSNEDWVSA…FNKGDNIFKN (347 aa). WD repeat units lie at residues 101-138, 140-178, 195-232, 270-310, 312-351, 358-398, and 409-445; these read SNEDWVSALDVGAERIVSGSYDGVVRTWNLSGKIEKQY, GHTGAVRAVKFISSTRLVSGGNDRTLRLWKTKNDDVKHV, GHQAPVVSVDVQGDRILSASYDNSIGFWSTNHKDMTAV, SHKA…CVDT, STSYSLLSMVELPKLRLLACGSSARHITLHDPRADSSAKI, GHKN…SIYT, and GINDKVFAVKWAKGVGIISGGQDKKIQFNKGDNIFKN.

This sequence belongs to the WD repeat WDR12/YTM1 family. In terms of assembly, component of the NOP7 complex, composed of ERB1, NOP7 and YTM1. The complex is held together by ERB1, which interacts with NOP7 via its N-terminal domain and with YTM1 via a high-affinity interaction between the seven-bladed beta-propeller domains of the 2 proteins. The NOP7 complex associates with the 66S pre-ribosome. Interacts (via UBL domain) with MDN1 (via VWFA/MIDAS domain).

It is found in the nucleus. The protein resides in the nucleolus. Its subcellular location is the nucleoplasm. Component of the NOP7 complex, which is required for maturation of the 25S and 5.8S ribosomal RNAs and formation of the 60S ribosome. The polypeptide is Ribosome biogenesis protein YTM1 (Eremothecium gossypii (strain ATCC 10895 / CBS 109.51 / FGSC 9923 / NRRL Y-1056) (Yeast)).